We begin with the raw amino-acid sequence, 455 residues long: Single-stranded DNA-binding protein homolog sam-10 (455 aa).

One can recognise a LisH domain in the interval 19-51 (ARDRLTSYIYEYLQQTGASKTAETFKEEVLSTN). Disordered stretches follow at residues 217–249 (PPPG…LNSP), 281–302 (SDHQ…TAGG), 314–343 (GPGS…HQPK), and 357–442 (EALT…NGEI). Composition is skewed to low complexity over residues 288–298 (AGPAAAAPGAT) and 321–336 (VATT…SSIG). The span at 396 to 406 (HSVNNNVNPGT) shows a compositional bias: polar residues. Positions 407 to 421 (PGSNPLSNPMSNPPL) are enriched in low complexity.

Ubiquitously expressed with higher expression in the head and tail ganglia, the vulva and PLM neurons.

The protein localises to the cytoplasm. It is found in the nucleus. Its function is as follows. Involved cell autonomously in PLM neuron pre-synaptic differentiation by negatively regulating prk-2 expression and in neurite branch positioning. The polypeptide is Single-stranded DNA-binding protein homolog sam-10 (Caenorhabditis elegans).